Reading from the N-terminus, the 594-residue chain is KIF-binding protein (594 aa).

The protein belongs to the KIF-binding protein family.

The protein localises to the cytoplasm. Its subcellular location is the cytoskeleton. Activator of KIF1B plus-end-directed microtubule motor activity. Required for organization of axonal microtubules, and axonal outgrowth and maintenance during peripheral and central nervous system development. The protein is KIF-binding protein (Kifbp) of Gallus gallus (Chicken).